We begin with the raw amino-acid sequence, 287 residues long: 4,4'-diapophytoene synthase (287 aa).

(2E,6E)-farnesyl diphosphate is bound by residues 18-21, Y41, and R45; that span reads HSKS. Mg(2+) is bound by residues D48 and D52. Q165 contacts (2E,6E)-farnesyl diphosphate. N168 contributes to the Mg(2+) binding site. R171 contacts (2E,6E)-farnesyl diphosphate. D172 lines the Mg(2+) pocket. (2E,6E)-farnesyl diphosphate is bound at residue Y248.

This sequence belongs to the phytoene/squalene synthase family. CrtM subfamily. Requires Mg(2+) as cofactor.

It carries out the reaction 2 (2E,6E)-farnesyl diphosphate = 15-cis-4,4'-diapophytoene + 2 diphosphate. It participates in carotenoid biosynthesis; staphyloxanthin biosynthesis; staphyloxanthin from farnesyl diphosphate: step 1/5. In terms of biological role, involved in the biosynthesis of the yellow-orange carotenoid staphyloxanthin, which plays a role in the virulence via its protective function against oxidative stress. Catalyzes the head-to-head condensation of two molecules of farnesyl diphosphate (FPP) into the colorless C(30) carotenoid 4,4'-diapophytoene (dehydrosqualene). This is 4,4'-diapophytoene synthase (crtM) from Staphylococcus aureus (strain Mu50 / ATCC 700699).